The following is a 655-amino-acid chain: Acetyl-coenzyme A synthetase (655 aa).

CoA is bound by residues Arg196–Lys199 and Thr316. Residues Gly392–Pro394, Asp416–Thr421, Asp507, and Arg522 each bind ATP. Ser530 serves as a coordination point for CoA. An ATP-binding site is contributed by Arg533. 2 residues coordinate Mg(2+): Val544 and Val549. N6-acetyllysine is present on Lys619.

It belongs to the ATP-dependent AMP-binding enzyme family. Requires Mg(2+) as cofactor. In terms of processing, acetylated. Deacetylation by the SIR2-homolog deacetylase activates the enzyme.

It carries out the reaction acetate + ATP + CoA = acetyl-CoA + AMP + diphosphate. Its function is as follows. Catalyzes the conversion of acetate into acetyl-CoA (AcCoA), an essential intermediate at the junction of anabolic and catabolic pathways. AcsA undergoes a two-step reaction. In the first half reaction, AcsA combines acetate with ATP to form acetyl-adenylate (AcAMP) intermediate. In the second half reaction, it can then transfer the acetyl group from AcAMP to the sulfhydryl group of CoA, forming the product AcCoA. The sequence is that of Acetyl-coenzyme A synthetase from Thiobacillus denitrificans (strain ATCC 25259 / T1).